A 298-amino-acid chain; its full sequence is Inosose dehydratase (298 aa).

It belongs to the IolE/MocC family. Glutathione is required as a cofactor. The cofactor is Co(2+). Mn(2+) serves as cofactor.

It catalyses the reaction scyllo-inosose = 3D-3,5/4-trihydroxycyclohexane-1,2-dione + H2O. Catalyzes the dehydration of inosose (2-keto-myo-inositol, 2KMI or 2,4,6/3,5-pentahydroxycyclohexanone) to 3D-(3,5/4)-trihydroxycyclohexane-1,2-dione (D-2,3-diketo-4-deoxy-epi-inositol). In Serratia proteamaculans (strain 568), this protein is Inosose dehydratase.